Here is a 498-residue protein sequence, read N- to C-terminus: ATP synthase subunit beta, chloroplastic (498 aa).

Position 172–179 (172–179 (GGAGVGKT)) interacts with ATP.

It belongs to the ATPase alpha/beta chains family. In terms of assembly, F-type ATPases have 2 components, CF(1) - the catalytic core - and CF(0) - the membrane proton channel. CF(1) has five subunits: alpha(3), beta(3), gamma(1), delta(1), epsilon(1). CF(0) has four main subunits: a(1), b(1), b'(1) and c(9-12).

It is found in the plastid. The protein resides in the chloroplast thylakoid membrane. It carries out the reaction ATP + H2O + 4 H(+)(in) = ADP + phosphate + 5 H(+)(out). Functionally, produces ATP from ADP in the presence of a proton gradient across the membrane. The catalytic sites are hosted primarily by the beta subunits. The sequence is that of ATP synthase subunit beta, chloroplastic from Solanum lycopersicum (Tomato).